Reading from the N-terminus, the 543-residue chain is Chaperonin GroEL (543 aa).

ATP contacts are provided by residues 29-32 (TLGP), 86-90 (DGTTT), glycine 413, 476-478 (NAA), and aspartate 492.

The protein belongs to the chaperonin (HSP60) family. As to quaternary structure, forms a cylinder of 14 subunits composed of two heptameric rings stacked back-to-back. Interacts with the co-chaperonin GroES.

Its subcellular location is the cytoplasm. The catalysed reaction is ATP + H2O + a folded polypeptide = ADP + phosphate + an unfolded polypeptide.. In terms of biological role, together with its co-chaperonin GroES, plays an essential role in assisting protein folding. The GroEL-GroES system forms a nano-cage that allows encapsulation of the non-native substrate proteins and provides a physical environment optimized to promote and accelerate protein folding. The sequence is that of Chaperonin GroEL from Streptococcus pyogenes serotype M5 (strain Manfredo).